Consider the following 351-residue polypeptide: Large ribosomal subunit protein uL3 (351 aa).

2 disordered regions span residues 1–31 and 246–271; these read MGHRKLASPRRGSAGLRPRKRSSELLPTPRT and KGSRKIGTRGPSLGTPSYTPQPGQLG.

Belongs to the universal ribosomal protein uL3 family. As to quaternary structure, part of the 50S ribosomal subunit. Forms a cluster with proteins L14 and L24e.

Functionally, one of the primary rRNA binding proteins, it binds directly near the 3'-end of the 23S rRNA, where it nucleates assembly of the 50S subunit. This is Large ribosomal subunit protein uL3 from Saccharolobus islandicus (strain M.14.25 / Kamchatka #1) (Sulfolobus islandicus).